Here is a 69-residue protein sequence, read N- to C-terminus: Putative membrane protein insertion efficiency factor (69 aa).

It belongs to the UPF0161 family.

Its subcellular location is the cell inner membrane. In terms of biological role, could be involved in insertion of integral membrane proteins into the membrane. The protein is Putative membrane protein insertion efficiency factor of Azoarcus sp. (strain BH72).